Consider the following 344-residue polypeptide: uncharacterized protein (344 aa).

The next 5 membrane-spanning stretches (helical) occupy residues 53–73 (FVVGLLLSFILGNVLWGVSVW), 84–104 (WPILPTAFSLHFLFYGLGYNI), 153–173 (IYPLFHYFYIHIFQVLHLYLL), 189–209 (FGAWDWIALELFMFMFVLEML), and 275–295 (IASESLLNWTIFAWLGLVGVF).

It belongs to the steroid 5-alpha reductase family.

The protein localises to the endoplasmic reticulum membrane. This is an uncharacterized protein from Schizosaccharomyces pombe (strain 972 / ATCC 24843) (Fission yeast).